The sequence spans 159 residues: Gigasin-1 (159 aa).

2 disordered regions span residues glycine 1 to threonine 33 and lysine 80 to arginine 159.

Component of the organic matrix of calcified shell layers.

This chain is Gigasin-1, found in Magallana gigas (Pacific oyster).